Consider the following 348-residue polypeptide: Selenide, water dikinase (348 aa).

Cys17 is an active-site residue. Residues Lys20 and 47-49 (RAD) contribute to the ATP site. Asp50 is a Mg(2+) binding site. ATP contacts are provided by residues Asp67, Asp90, and 138–140 (GHT). Residue Asp90 participates in Mg(2+) binding. Asp226 lines the Mg(2+) pocket.

The protein belongs to the selenophosphate synthase 1 family. Class I subfamily. Homodimer. Mg(2+) is required as a cofactor.

It catalyses the reaction hydrogenselenide + ATP + H2O = selenophosphate + AMP + phosphate + 2 H(+). Its function is as follows. Synthesizes selenophosphate from selenide and ATP. The sequence is that of Selenide, water dikinase from Pelobacter propionicus (strain DSM 2379 / NBRC 103807 / OttBd1).